The sequence spans 601 residues: Glutathione-regulated potassium-efflux system protein KefB (601 aa).

The next 13 helical transmembrane spans lie at 4 to 24, 29 to 49, 55 to 75, 87 to 107, 111 to 131, 152 to 172, 177 to 197, 207 to 227, 230 to 250, 262 to 282, 284 to 304, 324 to 344, and 356 to 376; these read ADLL…VPLA, IGAV…GLGF, EILH…GLEL, IFGV…GLLM, FLWQ…TAMA, VLLF…LLAG, HFDW…LIGG, FIAA…LVLS, LFMD…GVLL, AIDP…GMSL, LGVL…LVVI, MQFA…FSTA, and ALLL…MKGI. Residues 400–519 enclose the RCK N-terminal domain; sequence KPQVIVVGFG…AGVTQFSRET (120 aa).

This sequence belongs to the monovalent cation:proton antiporter 2 (CPA2) transporter (TC 2.A.37) family. KefB subfamily. In terms of assembly, interacts with the regulatory subunit KefG.

Its subcellular location is the cell inner membrane. Pore-forming subunit of a potassium efflux system that confers protection against electrophiles. Catalyzes K(+)/H(+) antiport. The sequence is that of Glutathione-regulated potassium-efflux system protein KefB from Salmonella newport (strain SL254).